The following is a 123-amino-acid chain: Large ribosomal subunit protein uL14 (123 aa).

The protein belongs to the universal ribosomal protein uL14 family. In terms of assembly, part of the 50S ribosomal subunit. Forms a cluster with proteins L3 and L19. In the 70S ribosome, L14 and L19 interact and together make contacts with the 16S rRNA in bridges B5 and B8.

Binds to 23S rRNA. Forms part of two intersubunit bridges in the 70S ribosome. The chain is Large ribosomal subunit protein uL14 from Koribacter versatilis (strain Ellin345).